We begin with the raw amino-acid sequence, 308 residues long: rRNA 2'-O-methyltransferase fibrillarin 1 (308 aa).

The interval 1–68 is disordered; sequence MRPPVTGGRG…PRGGMKGGSK (68 aa). The span at 22 to 35 shows a compositional bias: gly residues; the sequence is GRGFGGGRSFGGGR. The span at 42–52 shows a compositional bias: basic residues; it reads SGPRGRGRGAP. Residues 53–65 are compositionally biased toward gly residues; it reads RGRGGPPRGGMKG. S-adenosyl-L-methionine is bound by residues 156–157, 175–176, 200–201, and 220–223; these read TT, EF, DA, and DVAQ.

It belongs to the methyltransferase superfamily. Fibrillarin family. Component of box C/D small nucleolar ribonucleoprotein (snoRNP) particles. Interacts with SKP1A. In terms of tissue distribution, expressed in roots, leaves and flowers. Expressed in stems.

It localises to the nucleus. The protein localises to the nucleolus. The catalysed reaction is a ribonucleotide in rRNA + S-adenosyl-L-methionine = a 2'-O-methylribonucleotide in rRNA + S-adenosyl-L-homocysteine + H(+). It carries out the reaction L-glutaminyl-[histone H2A] + S-adenosyl-L-methionine = N(5)-methyl-L-glutaminyl-[histone H2A] + S-adenosyl-L-homocysteine + H(+). Functionally, S-adenosyl-L-methionine-dependent methyltransferase that has the ability to methylate both RNAs and proteins. Involved in pre-rRNA processing. Utilizes the methyl donor S-adenosyl-L-methionine to catalyze the site-specific 2'-hydroxyl methylation of ribose moieties in pre-ribosomal RNA. Site specificity is provided by a guide RNA that base pairs with the substrate. Methylation occurs at a characteristic distance from the sequence involved in base pairing with the guide RNA. Also acts as a protein methyltransferase by mediating methylation of 'Gln-105' of histone H2A (H2AQ105me), a modification that impairs binding of the FACT complex and is specifically present at 35S ribosomal DNA locus. Binds monophosphate phosphoinositides in vitro. The sequence is that of rRNA 2'-O-methyltransferase fibrillarin 1 from Arabidopsis thaliana (Mouse-ear cress).